The following is a 476-amino-acid chain: Eukaryotic translation initiation factor 3 subunit L (476 aa).

Residues Asp-257–Leu-452 form the PCI domain.

The protein belongs to the eIF-3 subunit L family. As to quaternary structure, component of the eukaryotic translation initiation factor 3 (eIF-3) complex.

It is found in the cytoplasm. Functionally, component of the eukaryotic translation initiation factor 3 (eIF-3) complex, which is involved in protein synthesis of a specialized repertoire of mRNAs and, together with other initiation factors, stimulates binding of mRNA and methionyl-tRNAi to the 40S ribosome. The eIF-3 complex specifically targets and initiates translation of a subset of mRNAs involved in cell proliferation. The sequence is that of Eukaryotic translation initiation factor 3 subunit L from Neosartorya fischeri (strain ATCC 1020 / DSM 3700 / CBS 544.65 / FGSC A1164 / JCM 1740 / NRRL 181 / WB 181) (Aspergillus fischerianus).